Reading from the N-terminus, the 74-residue chain is Defensin (74 aa).

An N-terminal signal peptide occupies residues M1–A21. A propeptide spanning residues D22–V34 is cleaved from the precursor. Cystine bridges form between C40/C61, C47/C69, and C51/C71.

In terms of tissue distribution, expressed in the hemocytes, fat body and ovaries.

It is found in the secreted. Its function is as follows. Antibacterial peptide mostly active against Gram-positive bacteria. This Rhipicephalus microplus (Cattle tick) protein is Defensin.